Here is a 93-residue protein sequence, read N- to C-terminus: Alpha-defensin 21 (93 aa).

The N-terminal stretch at 1 to 19 is a signal peptide; that stretch reads MKTLVLLSALILLAYQVQT. Residues 20-58 constitute a propeptide that is removed on maturation; that stretch reads DPIQNTDEETNTEEQPGEDDQAVSVSFGGQEGSALHEKL. A disordered region spans residues 22–43; sequence IQNTDEETNTEEQPGEDDQAVS. Positions 25–40 are enriched in acidic residues; it reads TDEETNTEEQPGEDDQ. 3 disulfide bridges follow: cysteine 64–cysteine 89, cysteine 66–cysteine 81, and cysteine 71–cysteine 88.

This sequence belongs to the alpha-defensin family.

The protein localises to the secreted. May have microbicidal activities. In Mus musculus (Mouse), this protein is Alpha-defensin 21 (Defa21).